Reading from the N-terminus, the 439-residue chain is Xylose isomerase (439 aa).

Catalysis depends on residues H101 and D104. Residues E232, E268, H271, D296, D307, D309, and D339 each contribute to the Mg(2+) site.

This sequence belongs to the xylose isomerase family. As to quaternary structure, homotetramer. Mg(2+) is required as a cofactor.

Its subcellular location is the cytoplasm. The enzyme catalyses alpha-D-xylose = alpha-D-xylulofuranose. This is Xylose isomerase from Yersinia enterocolitica serotype O:8 / biotype 1B (strain NCTC 13174 / 8081).